The following is a 338-amino-acid chain: Outer membrane transporter protein TsaT (338 aa).

Residues 1–22 (MNFRRRLCTAALIAALPLASQA) form the signal peptide.

Part of a two-component transport system composed of TsaT and TsaS.

The protein localises to the cell outer membrane. Its function is as follows. Involved in the uptake of p-toluenesulphonate (TSA). Forms a large, general diffusion pore with a preference for anions. This chain is Outer membrane transporter protein TsaT (tsaT), found in Comamonas testosteroni (Pseudomonas testosteroni).